A 313-amino-acid chain; its full sequence is Olfactory receptor 5H15 (313 aa).

Over 1–28 (MEEENATLLTEFVLTGFLYQPQWKIPLF) the chain is Extracellular. The N-linked (GlcNAc...) asparagine glycan is linked to N5. Residues 29 to 49 (LAFLVIYLITIMGNLGLIAVI) form a helical membrane-spanning segment. At 50-56 (WKDPHLH) the chain is on the cytoplasmic side. A helical transmembrane segment spans residues 57 to 77 (IPMYLLLGNLAFVDAWISSTV). Over 78–98 (TPKMLNNFLAKSKMISLSECK) the chain is Extracellular. A disulfide bond links C97 and C179. The chain crosses the membrane as a helical span at residues 99-119 (IQFFSIAIGVTTECFLLATMA). Over 120 to 143 (YDRYVAICKPLLYPAIMTNGLCIR) the chain is Cytoplasmic. The chain crosses the membrane as a helical span at residues 144-164 (LLILSYIAGILHALIHEGFLF). The Extracellular portion of the chain corresponds to 165–195 (RLTFCNSNIVHHIYCDTIPLSKISCTDSSIN). A helical transmembrane segment spans residues 196–216 (FLMVFIFSGSIQVFSIVTILI). Residues 217–240 (SYTFVLFTVLEKKSDKGVRKAFST) lie on the Cytoplasmic side of the membrane. The chain crosses the membrane as a helical span at residues 241-261 (CGAHLFSVCLYYGPLLLMYVG). Residues 262 to 271 (PASPQADGQN) lie on the Extracellular side of the membrane. The helical transmembrane segment at 272–292 (MVEPLFYTVIIPLLNPIIYSL) threads the bilayer. Over 293–313 (RNKQVIVSFIKMLKRNVKVSY) the chain is Cytoplasmic.

Belongs to the G-protein coupled receptor 1 family.

The protein localises to the cell membrane. Its function is as follows. Odorant receptor. The chain is Olfactory receptor 5H15 (OR5H15) from Homo sapiens (Human).